Consider the following 140-residue polypeptide: Small ribosomal subunit protein eS12 (140 aa).

Belongs to the eukaryotic ribosomal protein eS12 family. Part of the small subunit (SSU) processome, composed of more than 70 proteins and the RNA chaperone small nucleolar RNA (snoRNA) U3. Subunit of the 40S ribosomal complex.

Its subcellular location is the nucleus. It localises to the nucleolus. Functionally, part of the small subunit (SSU) processome, first precursor of the small eukaryotic ribosomal subunit. During the assembly of the SSU processome in the nucleolus, many ribosome biogenesis factors, an RNA chaperone and ribosomal proteins associate with the nascent pre-rRNA and work in concert to generate RNA folding, modifications, rearrangements and cleavage as well as targeted degradation of pre-ribosomal RNA by the RNA exosome. Subunit of the 40S ribosomal complex. Involved in cold-warm shock-induced translocation of the RNA exosome components from the nucleolus to nucleoplasm. The protein is Small ribosomal subunit protein eS12 (rps-12) of Caenorhabditis elegans.